Here is a 409-residue protein sequence, read N- to C-terminus: LL-diaminopimelate aminotransferase (409 aa).

Substrate-binding residues include Tyr15 and Gly42. Pyridoxal 5'-phosphate contacts are provided by residues Tyr72, 108–109, Tyr132, Asn187, Tyr218, and 246–248; these read SK and SFS. Substrate contacts are provided by Lys109, Tyr132, and Asn187. Lys249 carries the N6-(pyridoxal phosphate)lysine modification. The pyridoxal 5'-phosphate site is built by Arg257 and Asn292. Substrate is bound by residues Asn292 and Arg388.

Belongs to the class-I pyridoxal-phosphate-dependent aminotransferase family. LL-diaminopimelate aminotransferase subfamily. Homodimer. Pyridoxal 5'-phosphate is required as a cofactor.

The enzyme catalyses (2S,6S)-2,6-diaminopimelate + 2-oxoglutarate = (S)-2,3,4,5-tetrahydrodipicolinate + L-glutamate + H2O + H(+). The protein operates within amino-acid biosynthesis; L-lysine biosynthesis via DAP pathway; LL-2,6-diaminopimelate from (S)-tetrahydrodipicolinate (aminotransferase route): step 1/1. Its function is as follows. Involved in the synthesis of meso-diaminopimelate (m-DAP or DL-DAP), required for both lysine and peptidoglycan biosynthesis. Catalyzes the direct conversion of tetrahydrodipicolinate to LL-diaminopimelate. In Heliobacterium modesticaldum (strain ATCC 51547 / Ice1), this protein is LL-diaminopimelate aminotransferase.